The following is a 178-amino-acid chain: Peptide deformylase 2 (178 aa).

Fe cation-binding residues include cysteine 101 and histidine 143. Residue glutamate 144 is part of the active site. Histidine 147 is a binding site for Fe cation.

The protein belongs to the polypeptide deformylase family. Fe(2+) is required as a cofactor.

It carries out the reaction N-terminal N-formyl-L-methionyl-[peptide] + H2O = N-terminal L-methionyl-[peptide] + formate. Its function is as follows. Removes the formyl group from the N-terminal Met of newly synthesized proteins. Requires at least a dipeptide for an efficient rate of reaction. N-terminal L-methionine is a prerequisite for activity but the enzyme has broad specificity at other positions. This Pseudomonas putida (strain ATCC 47054 / DSM 6125 / CFBP 8728 / NCIMB 11950 / KT2440) protein is Peptide deformylase 2.